The chain runs to 361 residues: Probable cinnamyl alcohol dehydrogenase (361 aa).

Cysteine 48 is a binding site for Zn(2+). Position 50 (threonine 50) interacts with NADP(+). Zn(2+)-binding residues include histidine 70, glutamate 71, cysteine 101, cysteine 104, cysteine 107, cysteine 115, and cysteine 164. NADP(+)-binding positions include threonine 168, 189–194, 212–217, threonine 252, glycine 276, and 299–301; these read GLGGVG, SSSDKK, and SFI.

Belongs to the zinc-containing alcohol dehydrogenase family. In terms of assembly, homodimer. Zn(2+) serves as cofactor.

The enzyme catalyses (E)-cinnamyl alcohol + NADP(+) = (E)-cinnamaldehyde + NADPH + H(+). It catalyses the reaction (E)-coniferol + NADP(+) = (E)-coniferaldehyde + NADPH + H(+). The catalysed reaction is (E)-sinapyl alcohol + NADP(+) = (E)-sinapaldehyde + NADPH + H(+). It carries out the reaction (E)-4-coumaroyl alcohol + NADP(+) = (E)-4-coumaraldehyde + NADPH + H(+). The enzyme catalyses (E)-caffeyl alcohol + NADP(+) = (E)-caffeyl aldehyde + NADPH + H(+). The protein operates within aromatic compound metabolism; phenylpropanoid biosynthesis. Involved in lignin biosynthesis. Catalyzes the final step specific for the production of lignin monomers. Catalyzes the NADPH-dependent reduction of coniferaldehyde, 5-hydroxyconiferaldehyde, sinapaldehyde, 4-coumaraldehyde and caffeyl aldehyde to their respective alcohols. In Lolium perenne (Perennial ryegrass), this protein is Probable cinnamyl alcohol dehydrogenase.